We begin with the raw amino-acid sequence, 353 residues long: Fe(3+) ions import ATP-binding protein FbpC (353 aa).

Residues 9 to 239 (VTFENVTKKF…PASAFIADFM (231 aa)) form the ABC transporter domain. An ATP-binding site is contributed by 41–48 (GPSGCGKT).

This sequence belongs to the ABC transporter superfamily. Fe(3+) ion importer (TC 3.A.1.10) family. The complex is composed of two ATP-binding proteins (FbpC), two transmembrane proteins (FbpB) and a solute-binding protein (FbpA).

The protein localises to the cell inner membrane. The enzyme catalyses Fe(3+)(out) + ATP + H2O = Fe(3+)(in) + ADP + phosphate + H(+). Functionally, part of the ABC transporter complex FbpABC involved in Fe(3+) ions import. Responsible for energy coupling to the transport system. This Brucella suis biovar 1 (strain 1330) protein is Fe(3+) ions import ATP-binding protein FbpC.